We begin with the raw amino-acid sequence, 325 residues long: Transcription initiation factor IIB 2 (325 aa).

Polar residues predominate over residues 1–13; it reads MSDSTIRTYSSDQ. The disordered stretch occupies residues 1–29; the sequence is MSDSTIRTYSSDQRQTDNDETVSTPDEDV. The TFIIB-type zinc finger occupies 28–58; that stretch reads DVLTCPECGGQVIDDEEHGESVCVDCGLVVE. Residues Cys32, Cys35, Cys50, and Cys53 each contribute to the Zn(2+) site. The tract at residues 73–93 is disordered; it reads STEKDEKSRVGAPTTNMMHDK. 2 repeat units span residues 144–227 and 238–319.

The protein belongs to the TFIIB family.

Stabilizes TBP binding to an archaeal box-A promoter. Also responsible for recruiting RNA polymerase II to the pre-initiation complex (DNA-TBP-TFIIB). The chain is Transcription initiation factor IIB 2 from Halobacterium salinarum (strain ATCC 700922 / JCM 11081 / NRC-1) (Halobacterium halobium).